The primary structure comprises 188 residues: Peptidyl-tRNA hydrolase (188 aa).

Residue Y14 coordinates tRNA. H19 functions as the Proton acceptor in the catalytic mechanism. Residues Y64, N66, and N112 each contribute to the tRNA site.

Belongs to the PTH family. As to quaternary structure, monomer.

It localises to the cytoplasm. The catalysed reaction is an N-acyl-L-alpha-aminoacyl-tRNA + H2O = an N-acyl-L-amino acid + a tRNA + H(+). In terms of biological role, hydrolyzes ribosome-free peptidyl-tRNAs (with 1 or more amino acids incorporated), which drop off the ribosome during protein synthesis, or as a result of ribosome stalling. Functionally, catalyzes the release of premature peptidyl moieties from peptidyl-tRNA molecules trapped in stalled 50S ribosomal subunits, and thus maintains levels of free tRNAs and 50S ribosomes. In Clostridium novyi (strain NT), this protein is Peptidyl-tRNA hydrolase.